We begin with the raw amino-acid sequence, 246 residues long: Ribosomal RNA small subunit methyltransferase J (246 aa).

Residues 115-116 and aspartate 169 each bind S-adenosyl-L-methionine; that span reads ER.

This sequence belongs to the methyltransferase superfamily. RsmJ family.

The protein resides in the cytoplasm. The catalysed reaction is guanosine(1516) in 16S rRNA + S-adenosyl-L-methionine = N(2)-methylguanosine(1516) in 16S rRNA + S-adenosyl-L-homocysteine + H(+). Its function is as follows. Specifically methylates the guanosine in position 1516 of 16S rRNA. This chain is Ribosomal RNA small subunit methyltransferase J, found in Buchnera aphidicola subsp. Acyrthosiphon pisum (strain 5A).